Reading from the N-terminus, the 565-residue chain is Histone acetyltransferase ESA1 (565 aa).

A disordered region spans residues 1–33 (MAPRTQKSTSGTPGGSGTPGPDEGPQISPGGTY). The region spanning 38–117 (VVVGCKAFVQ…DEWVSGTRLI (80 aa)) is the Tudor-knot domain. The disordered stretch occupies residues 173–217 (AQAAKNVQGESGLETPQKRKADSGDTSTAQSIRADSIDADADGED). Residues 284 to 553 (ARVKNLNKIQ…INPQKLHWTA (270 aa)) enclose the MYST-type HAT domain. The segment at 317 to 342 (LYICEMCLSYFPSPFTLKRHRSKCTL) adopts a C2HC MYST-type zinc-finger fold. Positions 367–388 (RTWCRNLCLLSKCFLDHKTLYY) match the ESA1-RPD3 motif motif. An N6-acetyllysine; by autocatalysis modification is found at Lys384. Residues 425–429 (ACILT) and 434–440 (QRAGYGK) contribute to the acetyl-CoA site. The active-site Proton donor/acceptor is the Glu460. Position 464 (Ser464) interacts with acetyl-CoA.

It belongs to the MYST (SAS/MOZ) family. As to quaternary structure, component of the NuA4 histone acetyltransferase complex. Autoacetylation at Lys-384 is required for proper function.

It is found in the nucleus. The protein localises to the chromosome. The enzyme catalyses L-lysyl-[histone] + acetyl-CoA = N(6)-acetyl-L-lysyl-[histone] + CoA + H(+). It catalyses the reaction L-lysyl-[protein] + acetyl-CoA = N(6)-acetyl-L-lysyl-[protein] + CoA + H(+). The catalysed reaction is 2-hydroxyisobutanoyl-CoA + L-lysyl-[protein] = N(6)-(2-hydroxyisobutanoyl)-L-lysyl-[protein] + CoA + H(+). It carries out the reaction (2E)-butenoyl-CoA + L-lysyl-[protein] = N(6)-(2E)-butenoyl-L-lysyl-[protein] + CoA + H(+). In terms of biological role, catalytic component of the NuA4 histone acetyltransferase (HAT) complex which is involved in epigenetic transcriptional activation of selected genes principally by acetylation of nucleosomal histones H4, H3, H2B, H2A and H2A variant H2A.Z. Acetylates histone H4 to form H4K5ac, H4K8ac, H4K12ac and H4K16ac, histone H3 to form H3K14ac, and histone H2A to form H2AK4ac and H2AK7ac. The NuA4 complex is involved in the DNA damage response and is required for chromosome segregation. The NuA4 complex plays a direct role in repair of DNA double-strand breaks (DSBs) through homologous recombination. Recruitment to promoters depends on H3K4me. Also acetylates non-histone proteins. In addition to protein acetyltransferase, can use different acyl-CoA substrates, such as 2-hydroxyisobutanoyl-CoA (2-hydroxyisobutyryl-CoA) or (2E)-butenoyl-CoA (crotonyl-CoA), and is able to mediate protein 2-hydroxyisobutyrylation and crotonylation, respectively. This is Histone acetyltransferase ESA1 (ESA1) from Mycosarcoma maydis (Corn smut fungus).